We begin with the raw amino-acid sequence, 183 residues long: ATP synthase subunit b, chloroplastic (183 aa).

Residues 27–49 (LATNLINLTVVVGVLIFFGKGVL) traverse the membrane as a helical segment.

Belongs to the ATPase B chain family. In terms of assembly, F-type ATPases have 2 components, F(1) - the catalytic core - and F(0) - the membrane proton channel. F(1) has five subunits: alpha(3), beta(3), gamma(1), delta(1), epsilon(1). F(0) has four main subunits: a(1), b(1), b'(1) and c(10-14). The alpha and beta chains form an alternating ring which encloses part of the gamma chain. F(1) is attached to F(0) by a central stalk formed by the gamma and epsilon chains, while a peripheral stalk is formed by the delta, b and b' chains.

It is found in the plastid. The protein localises to the chloroplast thylakoid membrane. Its function is as follows. F(1)F(0) ATP synthase produces ATP from ADP in the presence of a proton or sodium gradient. F-type ATPases consist of two structural domains, F(1) containing the extramembraneous catalytic core and F(0) containing the membrane proton channel, linked together by a central stalk and a peripheral stalk. During catalysis, ATP synthesis in the catalytic domain of F(1) is coupled via a rotary mechanism of the central stalk subunits to proton translocation. Component of the F(0) channel, it forms part of the peripheral stalk, linking F(1) to F(0). In Lolium perenne (Perennial ryegrass), this protein is ATP synthase subunit b, chloroplastic.